The following is a 297-amino-acid chain: IMPACT family member C14C8.09c (297 aa).

A coiled-coil region spans residues 225–255; the sequence is LRSELQEKNQKDKKKEVNKLEEKMTNAKEPN. Composition is skewed to basic and acidic residues over residues 228–250 and 280–297; these read ELQEKNQKDKKKEVNKLEEKMTN and SVDHKEASKIIKDVEKEE. The segment at 228 to 297 is disordered; the sequence is ELQEKNQKDK…KIIKDVEKEE (70 aa).

The protein belongs to the IMPACT family.

In Schizosaccharomyces pombe (strain 972 / ATCC 24843) (Fission yeast), this protein is IMPACT family member C14C8.09c.